Here is a 205-residue protein sequence, read N- to C-terminus: Probable GTP-binding protein EngB (205 aa).

Residues Gln-29–Ser-203 enclose the EngB-type G domain. GTP-binding positions include Gly-37–Ser-44, Gly-64–Met-68, Asp-82–Gly-85, Thr-149–Asp-152, and Phe-182–Ser-184. Mg(2+) contacts are provided by Ser-44 and Thr-66.

Belongs to the TRAFAC class TrmE-Era-EngA-EngB-Septin-like GTPase superfamily. EngB GTPase family. The cofactor is Mg(2+).

Functionally, necessary for normal cell division and for the maintenance of normal septation. The polypeptide is Probable GTP-binding protein EngB (Coxiella burnetii (strain CbuG_Q212) (Coxiella burnetii (strain Q212))).